We begin with the raw amino-acid sequence, 118 residues long: MARIAGINIPDQKHTVIALTAIFGIGKTRSQAICVAAGIAEHVKISELSEEQIEKLRDEVAKYVVEGDLRREVTLSIKRLMDLGTYRGLRHRRGLPVRGQRTKTNARTRKGPRKPIKK.

The disordered stretch occupies residues 92-118 (RRGLPVRGQRTKTNARTRKGPRKPIKK).

Belongs to the universal ribosomal protein uS13 family. Part of the 30S ribosomal subunit. Forms a loose heterodimer with protein S19. Forms two bridges to the 50S subunit in the 70S ribosome.

Functionally, located at the top of the head of the 30S subunit, it contacts several helices of the 16S rRNA. In the 70S ribosome it contacts the 23S rRNA (bridge B1a) and protein L5 of the 50S subunit (bridge B1b), connecting the 2 subunits; these bridges are implicated in subunit movement. Contacts the tRNAs in the A and P-sites. This chain is Small ribosomal subunit protein uS13, found in Yersinia pestis.